Consider the following 230-residue polypeptide: Cytidylate kinase (230 aa).

Residue 12–20 participates in ATP binding; the sequence is GPSGAGKST.

It belongs to the cytidylate kinase family. Type 1 subfamily.

Its subcellular location is the cytoplasm. It carries out the reaction CMP + ATP = CDP + ADP. The enzyme catalyses dCMP + ATP = dCDP + ADP. The sequence is that of Cytidylate kinase from Corynebacterium diphtheriae (strain ATCC 700971 / NCTC 13129 / Biotype gravis).